Here is a 244-residue protein sequence, read N- to C-terminus: 5-oxoprolinase subunit A (244 aa).

It belongs to the LamB/PxpA family. As to quaternary structure, forms a complex composed of PxpA, PxpB and PxpC.

The catalysed reaction is 5-oxo-L-proline + ATP + 2 H2O = L-glutamate + ADP + phosphate + H(+). In terms of biological role, catalyzes the cleavage of 5-oxoproline to form L-glutamate coupled to the hydrolysis of ATP to ADP and inorganic phosphate. This is 5-oxoprolinase subunit A from Salmonella heidelberg (strain SL476).